The sequence spans 302 residues: uncharacterized protein (302 aa).

This is an uncharacterized protein from Schizosaccharomyces pombe (strain 972 / ATCC 24843) (Fission yeast).